Reading from the N-terminus, the 322-residue chain is Protein lin-56 (322 aa).

The disordered stretch occupies residues 264 to 322 (SSQKLQQNGFPEKVEQMDKYSNKLKDEASDKKYEKPGKKDYVEEEGYWAPITDSEDDEA). The segment covering 275–304 (EKVEQMDKYSNKLKDEASDKKYEKPGKKDY) has biased composition (basic and acidic residues).

Widely expressed throughout embryonic development. Expressed in the six multipotent ventral ectodermal blast cells, P3.p-P8.p, which generate the vulva and in their descendants throughout vulval development.

The protein localises to the nucleus. Functionally, required for translation, stability and/or localization of lin-15a. This chain is Protein lin-56 (lin-56), found in Caenorhabditis elegans.